Reading from the N-terminus, the 232-residue chain is MNNMTAIVPAAGVGSRMQADRPKQYLTLLDKTVLEHTVEHLLEHPLIEHVVVAVSADDPYFANLPLAHHPRVIRVDGGKERADSVLSALEYVCQHRLSEWVLVHDAARPCVTHADITQLITTALAHPIGAILASPVRDTMKRGDHLQQIVHTVDRTALWHALTPQMFRAQSLRERLFAALQQQVTITDEASAFEWRGEKPALVAGRADNLKITQPEDLALAEFYLSRNKEKS.

It belongs to the IspD/TarI cytidylyltransferase family. IspD subfamily.

It catalyses the reaction 2-C-methyl-D-erythritol 4-phosphate + CTP + H(+) = 4-CDP-2-C-methyl-D-erythritol + diphosphate. It participates in isoprenoid biosynthesis; isopentenyl diphosphate biosynthesis via DXP pathway; isopentenyl diphosphate from 1-deoxy-D-xylulose 5-phosphate: step 2/6. In terms of biological role, catalyzes the formation of 4-diphosphocytidyl-2-C-methyl-D-erythritol from CTP and 2-C-methyl-D-erythritol 4-phosphate (MEP). The chain is 2-C-methyl-D-erythritol 4-phosphate cytidylyltransferase from Vibrio cholerae serotype O1 (strain ATCC 39315 / El Tor Inaba N16961).